We begin with the raw amino-acid sequence, 455 residues long: Oxysterols receptor LXR-beta (455 aa).

Residues 1 to 10 (MSTPTTNSVD) show a composition bias toward polar residues. Residues 1–53 (MSTPTTNSVDTPLPGNGPSTPSSSPGGKEDGPEPCPGGADPDVPSTDGADSAS) are disordered. Residues 1 to 80 (MSTPTTNSVD…GPAPKMLGDE (80 aa)) are transactivation AF-1; required for ligand-independent transactivation function. The span at 14 to 26 (PGNGPSTPSSSPG) shows a compositional bias: low complexity. Positions 79 to 156 (DELCQVCGDT…AGMREQCVLS (78 aa)) form a DNA-binding region, nuclear receptor. NR C4-type zinc fingers lie at residues 82–102 (CQVC…CEGC) and 120–144 (CRGG…LRKC). Residues 164–210 (KIRKQQQQQQQQSSPTGPGVSSSSPASGPGASPGGSDGGGQGSGEGE) form a disordered region. Over residues 168 to 193 (QQQQQQQQSSPTGPGVSSSSPASGPG) the composition is skewed to low complexity. Positions 194–210 (ASPGGSDGGGQGSGEGE) are enriched in gly residues. The transactivation AF-2; required for ligand-dependent transactivation function; mediates interaction with CCAR2 stretch occupies residues 214–455 (LTAAQELMIQ…LLSEIWDVHE (242 aa)). An NR LBD domain is found at 217–455 (AQELMIQQLV…LLSEIWDVHE (239 aa)). Glycyl lysine isopeptide (Lys-Gly) (interchain with G-Cter in SUMO2) cross-links involve residues Lys-404 and Lys-442.

This sequence belongs to the nuclear hormone receptor family. NR1 subfamily. As to quaternary structure, forms a heterodimer with RXR. Interacts with CCAR2 (via N-terminus) in a ligand-independent manner. Interacts (when sumoylated) with GPS2; interaction with GPS2 onto hepatic acute phase protein promoters prevents N-Cor corepressor complex dissociation. Interacts with ABCA12 and ABCA1; this interaction is required for ABCA1 localization to the cell surface and is necessary for its normal activity and stability. Sumoylated by SUMO2 at Lys-404 and Lys-442 during the hepatic acute phase response, leading to promote interaction with GPS2 and prevent N-Cor corepressor complex dissociation.

The protein resides in the nucleus. Functionally, nuclear receptor that exhibits a ligand-dependent transcriptional activation activity. Binds preferentially to double-stranded oligonucleotide direct repeats having the consensus half-site sequence 5'-AGGTCA-3' and 4-nt spacing (DR-4). Regulates cholesterol uptake through MYLIP-dependent ubiquitination of LDLR, VLDLR and LRP8; DLDLR and LRP8. Interplays functionally with RORA for the regulation of genes involved in liver metabolism. Induces LPCAT3-dependent phospholipid remodeling in endoplasmic reticulum (ER) membranes of hepatocytes, driving SREBF1 processing and lipogenesis. Via LPCAT3, triggers the incorporation of arachidonate into phosphatidylcholines of ER membranes, increasing membrane dynamics and enabling triacylglycerols transfer to nascent very low-density lipoprotein (VLDL) particles. Via LPCAT3 also counteracts lipid-induced ER stress response and inflammation, likely by modulating SRC kinase membrane compartmentalization and limiting the synthesis of lipid inflammatory mediators. Plays an anti-inflammatory role during the hepatic acute phase response by acting as a corepressor: inhibits the hepatic acute phase response by preventing dissociation of the N-Cor corepressor complex. The chain is Oxysterols receptor LXR-beta (NR1H2) from Bos taurus (Bovine).